A 1199-amino-acid polypeptide reads, in one-letter code: Putative pyruvate-flavodoxin oxidoreductase (1199 aa).

2 4Fe-4S ferredoxin-type domains span residues 681–710 (EIPV…GKVY) and 737–766 (FTIQ…QPRL). 12 residues coordinate [4Fe-4S] cluster: cysteine 690, cysteine 693, cysteine 696, cysteine 700, cysteine 746, cysteine 749, cysteine 752, cysteine 756, cysteine 820, cysteine 823, cysteine 848, and cysteine 1079.

It belongs to the pyruvate:ferredoxin/flavodoxin oxidoreductase family. [4Fe-4S] cluster is required as a cofactor.

The enzyme catalyses oxidized [flavodoxin] + pyruvate + CoA + 2 H(+) = reduced [flavodoxin] + acetyl-CoA + CO2. Oxidoreductase required for the transfer of electrons from pyruvate to flavodoxin. This Synechocystis sp. (strain ATCC 27184 / PCC 6803 / Kazusa) protein is Putative pyruvate-flavodoxin oxidoreductase (nifJ).